The following is a 763-amino-acid chain: 1,4-alpha-glucan branching enzyme GlgB (763 aa).

D437 serves as the catalytic Nucleophile. E488 functions as the Proton donor in the catalytic mechanism.

The protein belongs to the glycosyl hydrolase 13 family. GlgB subfamily. In terms of assembly, monomer.

The enzyme catalyses Transfers a segment of a (1-&gt;4)-alpha-D-glucan chain to a primary hydroxy group in a similar glucan chain.. It functions in the pathway glycan biosynthesis; glycogen biosynthesis. Catalyzes the formation of the alpha-1,6-glucosidic linkages in glycogen by scission of a 1,4-alpha-linked oligosaccharide from growing alpha-1,4-glucan chains and the subsequent attachment of the oligosaccharide to the alpha-1,6 position. The chain is 1,4-alpha-glucan branching enzyme GlgB from Synechococcus sp. (strain JA-2-3B'a(2-13)) (Cyanobacteria bacterium Yellowstone B-Prime).